Reading from the N-terminus, the 617-residue chain is Protein fem-1 homolog A (617 aa).

ANK repeat units follow at residues 2–32 (DISA…EERA), 40–70 (EGGT…NVAL), 82–111 (EGAP…PVNN), 115–144 (TNST…DLEV), 148–177 (HGHT…DVNR), 181–210 (KGNT…RMER), and 213–242 (YGMT…ASRE). TPR repeat units follow at residues 245-279 (IHAL…RWAG) and 339-372 (SYYI…QQSN). ANK repeat units lie at residues 482–524 (GGHT…DVDS) and 528–557 (DNNT…HFDA).

This sequence belongs to the fem-1 family. In terms of assembly, component of a CRL2 E3 ubiquitin-protein ligase complex, also named ECS (Elongin BC-CUL2/5-SOCS-box protein) complex.

Its subcellular location is the mitochondrion. The protein localises to the cytoplasm. The protein operates within protein modification; protein ubiquitination. Functionally, substrate-recognition component of a Cul2-RING (CRL2) E3 ubiquitin-protein ligase complex of the DesCEND (destruction via C-end degrons) pathway, which recognizes a C-degron located at the extreme C terminus of target proteins, leading to their ubiquitination and degradation. The C-degron recognized by the DesCEND pathway is usually a motif of less than ten residues and can be present in full-length proteins, truncated proteins or proteolytically cleaved forms. The CRL2(FEM1A) complex specifically recognizes proteins with an arginine at the C-terminus: recognizes and binds proteins ending with -Lys/Arg-Xaa-Arg and -Lys/Arg-Xaa-Xaa-Arg C-degrons, leading to their ubiquitination and degradation. This Danio rerio (Zebrafish) protein is Protein fem-1 homolog A.